Reading from the N-terminus, the 116-residue chain is Ribosome-binding factor A (116 aa).

It belongs to the RbfA family. In terms of assembly, monomer. Binds 30S ribosomal subunits, but not 50S ribosomal subunits or 70S ribosomes.

The protein resides in the cytoplasm. In terms of biological role, one of several proteins that assist in the late maturation steps of the functional core of the 30S ribosomal subunit. Associates with free 30S ribosomal subunits (but not with 30S subunits that are part of 70S ribosomes or polysomes). Required for efficient processing of 16S rRNA. May interact with the 5'-terminal helix region of 16S rRNA. The polypeptide is Ribosome-binding factor A (Streptococcus pneumoniae (strain Hungary19A-6)).